Here is a 421-residue protein sequence, read N- to C-terminus: Putative bifunctional polynucleotide phosphatase/kinase (421 aa).

Residues 25-231 form a phosphatase region; it reads DSYLKGIINN…SENLKTNYKL (207 aa). Residues 235-415 form a kinase region; it reads NPTEIIDEIE…DDPKWKRSFM (181 aa). 265-272 contributes to the ATP binding site; sequence GQPGSGKS.

This sequence in the N-terminal section; belongs to the DNA 3' phosphatase family.

The catalysed reaction is a 3'end (2'-deoxyribonucleotide 3'-phosphate)-DNA + H2O = a 3'-end 2'-deoxyribonucleotide-DNA + phosphate. The enzyme catalyses a 5'-end dephospho-2'-deoxyribonucleoside-DNA + ATP = a 5'-end 5'-phospho-2'-deoxyribonucleoside-DNA + ADP + H(+). This chain is Putative bifunctional polynucleotide phosphatase/kinase, found in Acanthamoeba polyphaga mimivirus (APMV).